The sequence spans 473 residues: Photosystem II CP43 reaction center protein (473 aa).

Residues 1 to 14 (MKTLYSPRRYYPVE) constitute a propeptide that is removed on maturation. Position 15 is an N-acetylthreonine (T15). T15 carries the post-translational modification Phosphothreonine. 5 consecutive transmembrane segments (helical) span residues 69 to 93 (LFEV…PHLA), 134 to 155 (IIGP…KDKN), 178 to 200 (KAVW…RVIT), 255 to 275 (KPFA…LSYS), and 291 to 312 (WFNN…ASQA). E367 contributes to the [CaMn4O5] cluster binding site. A helical membrane pass occupies residues 447-471 (RARAAAAGFEKGIERETEPVLFMSP).

It belongs to the PsbB/PsbC family. PsbC subfamily. In terms of assembly, PSII is composed of 1 copy each of membrane proteins PsbA, PsbB, PsbC, PsbD, PsbE, PsbF, PsbH, PsbI, PsbJ, PsbK, PsbL, PsbM, PsbT, PsbX, PsbY, PsbZ, Psb30/Ycf12, at least 3 peripheral proteins of the oxygen-evolving complex and a large number of cofactors. It forms dimeric complexes. Requires Binds multiple chlorophylls and provides some of the ligands for the Ca-4Mn-5O cluster of the oxygen-evolving complex. It may also provide a ligand for a Cl- that is required for oxygen evolution. PSII binds additional chlorophylls, carotenoids and specific lipids. as cofactor.

Its subcellular location is the plastid. It localises to the chloroplast thylakoid membrane. One of the components of the core complex of photosystem II (PSII). It binds chlorophyll and helps catalyze the primary light-induced photochemical processes of PSII. PSII is a light-driven water:plastoquinone oxidoreductase, using light energy to abstract electrons from H(2)O, generating O(2) and a proton gradient subsequently used for ATP formation. In Chaetosphaeridium globosum (Charophycean green alga), this protein is Photosystem II CP43 reaction center protein.